The primary structure comprises 133 residues: Small ribosomal subunit protein uS8 (133 aa).

The protein belongs to the universal ribosomal protein uS8 family. In terms of assembly, part of the 30S ribosomal subunit. Contacts proteins S5 and S12.

One of the primary rRNA binding proteins, it binds directly to 16S rRNA central domain where it helps coordinate assembly of the platform of the 30S subunit. This chain is Small ribosomal subunit protein uS8, found in Synechocystis sp. (strain ATCC 27184 / PCC 6803 / Kazusa).